The following is a 197-amino-acid chain: Probable deoxycytidylate deaminase (197 aa).

Residues 49–183 enclose the CMP/dCMP-type deaminase domain; it reads KKHQRFLRIA…KMLDHARLPY (135 aa). H117 is a binding site for Zn(2+). The active-site Proton donor is the E119. Positions 143 and 146 each coordinate Zn(2+).

The protein belongs to the cytidine and deoxycytidylate deaminase family. The cofactor is Zn(2+).

The enzyme catalyses dCMP + H2O + H(+) = dUMP + NH4(+). Functionally, supplies the nucleotide substrate for thymidylate synthetase. In Caenorhabditis elegans, this protein is Probable deoxycytidylate deaminase.